We begin with the raw amino-acid sequence, 446 residues long: Histidine--tRNA ligase (446 aa).

It belongs to the class-II aminoacyl-tRNA synthetase family. In terms of assembly, homodimer.

It is found in the cytoplasm. It catalyses the reaction tRNA(His) + L-histidine + ATP = L-histidyl-tRNA(His) + AMP + diphosphate + H(+). The chain is Histidine--tRNA ligase from Burkholderia pseudomallei (strain 668).